The sequence spans 152 residues: UPF0266 membrane protein KPN78578_23010 (152 aa).

Transmembrane regions (helical) follow at residues 6–26 (LVII…QFIM), 45–65 (VDGM…ITQH), and 67–87 (TAIT…LFWI).

It belongs to the UPF0266 family.

Its subcellular location is the cell inner membrane. The polypeptide is UPF0266 membrane protein KPN78578_23010 (Klebsiella pneumoniae subsp. pneumoniae (strain ATCC 700721 / MGH 78578)).